A 133-amino-acid chain; its full sequence is Ribosome-binding factor A (133 aa).

The protein belongs to the RbfA family. In terms of assembly, monomer. Binds 30S ribosomal subunits, but not 50S ribosomal subunits or 70S ribosomes.

It localises to the cytoplasm. In terms of biological role, one of several proteins that assist in the late maturation steps of the functional core of the 30S ribosomal subunit. Associates with free 30S ribosomal subunits (but not with 30S subunits that are part of 70S ribosomes or polysomes). Required for efficient processing of 16S rRNA. May interact with the 5'-terminal helix region of 16S rRNA. The sequence is that of Ribosome-binding factor A from Proteus mirabilis (strain HI4320).